The following is a 148-amino-acid chain: ASCH domain-containing ribonuclease (148 aa).

The ASCH domain maps to 13-70 (SLWPEFAKAIVSGKKTVEFRRRIPLPALSARIWIYATRPVKSVIGFAYLEAIVQGDVN).

It depends on Mn(2+) as a cofactor. The cofactor is Ni(2+).

Its function is as follows. Shows sequence-specific endoribonuclease activity towards single-stranded RNA (ssRNA), with a preference for the bond between pyrimidine and adenine nucleotides. May also have 5'-exonuclease activity. In Zymomonas mobilis subsp. mobilis (strain ATCC 10988 / DSM 424 / LMG 404 / NCIMB 8938 / NRRL B-806 / ZM1), this protein is ASCH domain-containing ribonuclease.